Consider the following 311-residue polypeptide: Glutaminase (311 aa).

Positions 66, 116, 162, 169, 193, 245, and 263 each coordinate substrate.

Belongs to the glutaminase family. Homotetramer.

It carries out the reaction L-glutamine + H2O = L-glutamate + NH4(+). This Rhodopseudomonas palustris (strain HaA2) protein is Glutaminase.